The sequence spans 340 residues: Ketol-acid reductoisomerase (NADP(+)) (340 aa).

Positions 1 to 182 (MTVTMQYEKD…GSARVGLLET (182 aa)) constitute a KARI N-terminal Rossmann domain. NADP(+) is bound by residues 26 to 29 (YGSQ), Arg49, Ser53, and 83 to 86 (DEIQ). His108 is an active-site residue. Gly134 is a binding site for NADP(+). Positions 183–328 (TFKEETEEDL…AELRKAMPFV (146 aa)) constitute a KARI C-terminal knotted domain. The Mg(2+) site is built by Asp191, Glu195, Glu227, and Glu231. A substrate-binding site is contributed by Ser252.

Belongs to the ketol-acid reductoisomerase family. It depends on Mg(2+) as a cofactor.

The enzyme catalyses (2R)-2,3-dihydroxy-3-methylbutanoate + NADP(+) = (2S)-2-acetolactate + NADPH + H(+). The catalysed reaction is (2R,3R)-2,3-dihydroxy-3-methylpentanoate + NADP(+) = (S)-2-ethyl-2-hydroxy-3-oxobutanoate + NADPH + H(+). It functions in the pathway amino-acid biosynthesis; L-isoleucine biosynthesis; L-isoleucine from 2-oxobutanoate: step 2/4. Its pathway is amino-acid biosynthesis; L-valine biosynthesis; L-valine from pyruvate: step 2/4. Involved in the biosynthesis of branched-chain amino acids (BCAA). Catalyzes an alkyl-migration followed by a ketol-acid reduction of (S)-2-acetolactate (S2AL) to yield (R)-2,3-dihydroxy-isovalerate. In the isomerase reaction, S2AL is rearranged via a Mg-dependent methyl migration to produce 3-hydroxy-3-methyl-2-ketobutyrate (HMKB). In the reductase reaction, this 2-ketoacid undergoes a metal-dependent reduction by NADPH to yield (R)-2,3-dihydroxy-isovalerate. The sequence is that of Ketol-acid reductoisomerase (NADP(+)) from Streptococcus suis (strain 98HAH33).